Here is a 150-residue protein sequence, read N- to C-terminus: Large ribosomal subunit protein bL9 (150 aa).

This sequence belongs to the bacterial ribosomal protein bL9 family.

Binds to the 23S rRNA. This is Large ribosomal subunit protein bL9 from Streptococcus agalactiae serotype III (strain NEM316).